Consider the following 346-residue polypeptide: MNLQGKQVTVHDMTLRDGMHPKRHLMTLDQMKSIACGLDAAGVPLIEVTHGDGLGGSSVNYGFPAHTDEEYLGAVIPLMKQAKVSALLIPGIGTVEHLLMAKDLGVGTIRVATHCTEADVSEQHITKSRALGLDTVGFLMMAHMASPEKLVSQALLMQGYGANCIYVTDSAGYMLPDDVKARLGAVRAALKPETELGFHGHHNMAMGVANSIAAIEAGANRIDAAAAGLGAGAGNTPMEVFIAVCARMGIETGVDVFKIQDVAEDLVVPIMDHIIRIDRDSLTLGYAGVYSSFLLFAKRASVKYGVPARDILVELGRRGMVGGQEDMIEDTAMTMARERGLTLAAA.

The Pyruvate carboxyltransferase domain occupies 8-260 (VTVHDMTLRD…ETGVDVFKIQ (253 aa)). A substrate-binding site is contributed by 16-17 (RD). Asp-17 is a binding site for Mn(2+). His-20 (proton acceptor) is an active-site residue. Substrate-binding residues include Ser-170 and His-199. Mn(2+) is bound by residues His-199 and His-201. Residue Tyr-290 participates in substrate binding.

The protein belongs to the 4-hydroxy-2-oxovalerate aldolase family.

It carries out the reaction (S)-4-hydroxy-2-oxopentanoate = acetaldehyde + pyruvate. The sequence is that of 4-hydroxy-2-oxovalerate aldolase from Polaromonas naphthalenivorans (strain CJ2).